We begin with the raw amino-acid sequence, 232 residues long: Phosphatidylserine decarboxylase proenzyme (232 aa).

S190 (schiff-base intermediate with substrate; via pyruvic acid) is an active-site residue. S190 carries the pyruvic acid (Ser); by autocatalysis modification.

This sequence belongs to the phosphatidylserine decarboxylase family. PSD-A subfamily. In terms of assembly, heterodimer of a large membrane-associated beta subunit and a small pyruvoyl-containing alpha subunit. It depends on pyruvate as a cofactor. Post-translationally, is synthesized initially as an inactive proenzyme. Formation of the active enzyme involves a self-maturation process in which the active site pyruvoyl group is generated from an internal serine residue via an autocatalytic post-translational modification. Two non-identical subunits are generated from the proenzyme in this reaction, and the pyruvate is formed at the N-terminus of the alpha chain, which is derived from the carboxyl end of the proenzyme. The post-translation cleavage follows an unusual pathway, termed non-hydrolytic serinolysis, in which the side chain hydroxyl group of the serine supplies its oxygen atom to form the C-terminus of the beta chain, while the remainder of the serine residue undergoes an oxidative deamination to produce ammonia and the pyruvoyl prosthetic group on the alpha chain.

Its subcellular location is the cell membrane. It catalyses the reaction a 1,2-diacyl-sn-glycero-3-phospho-L-serine + H(+) = a 1,2-diacyl-sn-glycero-3-phosphoethanolamine + CO2. It functions in the pathway phospholipid metabolism; phosphatidylethanolamine biosynthesis; phosphatidylethanolamine from CDP-diacylglycerol: step 2/2. Its function is as follows. Catalyzes the formation of phosphatidylethanolamine (PtdEtn) from phosphatidylserine (PtdSer). The sequence is that of Phosphatidylserine decarboxylase proenzyme from Bartonella henselae (strain ATCC 49882 / DSM 28221 / CCUG 30454 / Houston 1) (Rochalimaea henselae).